Here is a 118-residue protein sequence, read N- to C-terminus: Fluoride-specific ion channel FluC 2 (118 aa).

4 consecutive transmembrane segments (helical) span residues M1–I21, F33–G53, G55–F75, and I93–M113. The Na(+) site is built by G70 and T73.

Belongs to the fluoride channel Fluc/FEX (TC 1.A.43) family.

The protein resides in the cell membrane. The catalysed reaction is fluoride(in) = fluoride(out). Its activity is regulated as follows. Na(+) is not transported, but it plays an essential structural role and its presence is essential for fluoride channel function. In terms of biological role, fluoride-specific ion channel. Important for reducing fluoride concentration in the cell, thus reducing its toxicity. The sequence is that of Fluoride-specific ion channel FluC 2 from Bacillus cereus (strain ATCC 10987 / NRS 248).